Reading from the N-terminus, the 81-residue chain is Dermaseptin-B7 (81 aa).

Positions 1 to 22 are cleaved as a signal peptide; that stretch reads MASLKKSLFLVLFLGLVSLSIC. Positions 23 to 44 are excised as a propeptide; sequence EEEKRENEDEEEQEDDEQSEMK. The disordered stretch occupies residues 24 to 48; it reads EEKRENEDEEEQEDDEQSEMKRGLW. Residues 30–40 are compositionally biased toward acidic residues; it reads EDEEEQEDDEQ. Val-78 is modified (valine amide). Positions 80 to 81 are excised as a propeptide; the sequence is EQ.

Belongs to the frog skin active peptide (FSAP) family. Dermaseptin subfamily. In terms of tissue distribution, expressed by the skin glands.

The protein localises to the secreted. Its function is as follows. Has antimicrobial activity. The sequence is that of Dermaseptin-B7 (DRG1) from Phyllomedusa bicolor (Two-colored leaf frog).